A 394-amino-acid chain; its full sequence is Phosphoglycerate kinase (394 aa).

Residues 21–23, arginine 36, 59–62, arginine 118, and arginine 151 each bind substrate; these read DFN and HLGR. Serine 183 bears the Phosphoserine mark. Lysine 201 lines the ATP pocket. Phosphothreonine is present on threonine 299. Residues asparagine 316, glutamate 323, and 350–353 contribute to the ATP site; that span reads GGDS.

It belongs to the phosphoglycerate kinase family. Monomer.

The protein resides in the cytoplasm. The enzyme catalyses (2R)-3-phosphoglycerate + ATP = (2R)-3-phospho-glyceroyl phosphate + ADP. It functions in the pathway carbohydrate degradation; glycolysis; pyruvate from D-glyceraldehyde 3-phosphate: step 2/5. The polypeptide is Phosphoglycerate kinase (Geobacillus stearothermophilus (Bacillus stearothermophilus)).